The primary structure comprises 363 residues: Protein LEG1 homolog (363 aa).

Residues 1–19 (MQCVWTLSLLQLVALWANA) form the signal peptide. N-linked (GlcNAc...) asparagine glycans are attached at residues Asn-79, Asn-261, and Asn-292.

Belongs to the LEG1 family.

It is found in the secreted. Its function is as follows. May be involved in early liver development. The sequence is that of Protein LEG1 homolog from Oncorhynchus mykiss (Rainbow trout).